The sequence spans 120 residues: Large ribosomal subunit protein eL18 (120 aa).

Belongs to the eukaryotic ribosomal protein eL18 family. In terms of assembly, part of the 50S ribosomal subunit.

In Pyrococcus furiosus (strain ATCC 43587 / DSM 3638 / JCM 8422 / Vc1), this protein is Large ribosomal subunit protein eL18.